The following is a 559-amino-acid chain: Formate--tetrahydrofolate ligase (559 aa).

Position 68-75 (68-75 (TPAGEGKT)) interacts with ATP.

This sequence belongs to the formate--tetrahydrofolate ligase family.

It carries out the reaction (6S)-5,6,7,8-tetrahydrofolate + formate + ATP = (6R)-10-formyltetrahydrofolate + ADP + phosphate. It participates in one-carbon metabolism; tetrahydrofolate interconversion. This is Formate--tetrahydrofolate ligase from Rhizobium johnstonii (strain DSM 114642 / LMG 32736 / 3841) (Rhizobium leguminosarum bv. viciae).